The following is a 93-amino-acid chain: ATP-dependent Clp protease adapter protein ClpS (93 aa).

This sequence belongs to the ClpS family. Binds to the N-terminal domain of the chaperone ClpA.

Functionally, involved in the modulation of the specificity of the ClpAP-mediated ATP-dependent protein degradation. The protein is ATP-dependent Clp protease adapter protein ClpS of Gloeobacter violaceus (strain ATCC 29082 / PCC 7421).